Reading from the N-terminus, the 319-residue chain is Acetyl-coenzyme A carboxylase carboxyl transferase subunit alpha (319 aa).

One can recognise a CoA carboxyltransferase C-terminal domain in the interval 39–293; that stretch reads RLQKKSNDLT…KAVLEKQLHE (255 aa).

This sequence belongs to the AccA family. In terms of assembly, acetyl-CoA carboxylase is a heterohexamer composed of biotin carboxyl carrier protein (AccB), biotin carboxylase (AccC) and two subunits each of ACCase subunit alpha (AccA) and ACCase subunit beta (AccD).

It localises to the cytoplasm. It carries out the reaction N(6)-carboxybiotinyl-L-lysyl-[protein] + acetyl-CoA = N(6)-biotinyl-L-lysyl-[protein] + malonyl-CoA. It participates in lipid metabolism; malonyl-CoA biosynthesis; malonyl-CoA from acetyl-CoA: step 1/1. Functionally, component of the acetyl coenzyme A carboxylase (ACC) complex. First, biotin carboxylase catalyzes the carboxylation of biotin on its carrier protein (BCCP) and then the CO(2) group is transferred by the carboxyltransferase to acetyl-CoA to form malonyl-CoA. The polypeptide is Acetyl-coenzyme A carboxylase carboxyl transferase subunit alpha (Neisseria meningitidis serogroup B (strain ATCC BAA-335 / MC58)).